Reading from the N-terminus, the 442-residue chain is 23S rRNA (uracil(1939)-C(5))-methyltransferase RlmD (442 aa).

A TRAM domain is found at 12-70; the sequence is SKQLSAKVTLEVTKLDHLGAGMAQHQGKIVFIPGALPNEKVTVQLTEQKKRHARAKLLK. [4Fe-4S] cluster-binding residues include cysteine 83, cysteine 89, cysteine 92, and cysteine 171. Positions 276, 305, 310, 326, 353, and 373 each coordinate S-adenosyl-L-methionine. Cysteine 399 acts as the Nucleophile in catalysis.

It belongs to the class I-like SAM-binding methyltransferase superfamily. RNA M5U methyltransferase family. RlmD subfamily.

The catalysed reaction is uridine(1939) in 23S rRNA + S-adenosyl-L-methionine = 5-methyluridine(1939) in 23S rRNA + S-adenosyl-L-homocysteine + H(+). Functionally, catalyzes the formation of 5-methyl-uridine at position 1939 (m5U1939) in 23S rRNA. The chain is 23S rRNA (uracil(1939)-C(5))-methyltransferase RlmD from Shewanella sediminis (strain HAW-EB3).